The primary structure comprises 502 residues: UPF0371 protein CLJ_B0384 (502 aa).

This sequence belongs to the UPF0371 family.

The protein is UPF0371 protein CLJ_B0384 of Clostridium botulinum (strain 657 / Type Ba4).